Here is a 240-residue protein sequence, read N- to C-terminus: UDP-2,3-diacylglucosamine hydrolase (240 aa).

The Mn(2+) site is built by aspartate 8, histidine 10, aspartate 41, asparagine 79, and histidine 114. Asparagine 79–arginine 80 lines the substrate pocket. Residues aspartate 122, serine 160, asparagine 164, lysine 167, and histidine 195 each coordinate substrate. Mn(2+) is bound by residues histidine 195 and histidine 197.

The protein belongs to the LpxH family. The cofactor is Mn(2+).

It is found in the cell inner membrane. The catalysed reaction is UDP-2-N,3-O-bis[(3R)-3-hydroxytetradecanoyl]-alpha-D-glucosamine + H2O = 2-N,3-O-bis[(3R)-3-hydroxytetradecanoyl]-alpha-D-glucosaminyl 1-phosphate + UMP + 2 H(+). It participates in glycolipid biosynthesis; lipid IV(A) biosynthesis; lipid IV(A) from (3R)-3-hydroxytetradecanoyl-[acyl-carrier-protein] and UDP-N-acetyl-alpha-D-glucosamine: step 4/6. In terms of biological role, hydrolyzes the pyrophosphate bond of UDP-2,3-diacylglucosamine to yield 2,3-diacylglucosamine 1-phosphate (lipid X) and UMP by catalyzing the attack of water at the alpha-P atom. Involved in the biosynthesis of lipid A, a phosphorylated glycolipid that anchors the lipopolysaccharide to the outer membrane of the cell. The protein is UDP-2,3-diacylglucosamine hydrolase of Klebsiella pneumoniae subsp. pneumoniae (strain ATCC 700721 / MGH 78578).